The following is a 169-amino-acid chain: 2-C-methyl-D-erythritol 2,4-cyclodiphosphate synthase (169 aa).

Residues Asp13 and His15 each coordinate a divalent metal cation. Residues 13 to 15 (DVH) and 39 to 40 (HS) contribute to the 4-CDP-2-C-methyl-D-erythritol 2-phosphate site. His47 is a binding site for a divalent metal cation. 4-CDP-2-C-methyl-D-erythritol 2-phosphate is bound by residues 61 to 63 (DIG), 66 to 70 (FPDTD), Phe144, and Arg147.

This sequence belongs to the IspF family. As to quaternary structure, homotrimer. A divalent metal cation is required as a cofactor.

The catalysed reaction is 4-CDP-2-C-methyl-D-erythritol 2-phosphate = 2-C-methyl-D-erythritol 2,4-cyclic diphosphate + CMP. Its pathway is isoprenoid biosynthesis; isopentenyl diphosphate biosynthesis via DXP pathway; isopentenyl diphosphate from 1-deoxy-D-xylulose 5-phosphate: step 4/6. Its function is as follows. Involved in the biosynthesis of isopentenyl diphosphate (IPP) and dimethylallyl diphosphate (DMAPP), two major building blocks of isoprenoid compounds. Catalyzes the conversion of 4-diphosphocytidyl-2-C-methyl-D-erythritol 2-phosphate (CDP-ME2P) to 2-C-methyl-D-erythritol 2,4-cyclodiphosphate (ME-CPP) with a corresponding release of cytidine 5-monophosphate (CMP). The chain is 2-C-methyl-D-erythritol 2,4-cyclodiphosphate synthase from Cupriavidus necator (strain ATCC 17699 / DSM 428 / KCTC 22496 / NCIMB 10442 / H16 / Stanier 337) (Ralstonia eutropha).